A 294-amino-acid chain; its full sequence is Cytidine deaminase (294 aa).

CMP/dCMP-type deaminase domains lie at 48 to 168 (DEDA…FGPK) and 186 to 294 (LTGD…VLLG). 89–91 (NME) contacts substrate. Histidine 102 contacts Zn(2+). The active-site Proton donor is glutamate 104. Zn(2+) contacts are provided by cysteine 129 and cysteine 132.

It belongs to the cytidine and deoxycytidylate deaminase family. As to quaternary structure, homodimer. Zn(2+) serves as cofactor.

The enzyme catalyses cytidine + H2O + H(+) = uridine + NH4(+). It catalyses the reaction 2'-deoxycytidine + H2O + H(+) = 2'-deoxyuridine + NH4(+). This enzyme scavenges exogenous and endogenous cytidine and 2'-deoxycytidine for UMP synthesis. This chain is Cytidine deaminase, found in Salmonella newport (strain SL254).